Here is a 699-residue protein sequence, read N- to C-terminus: Large T antigen (699 aa).

The residue at position 1 (Met-1) is an N-acetylmethionine; by host. A J domain is found at 12–75 (ELMDLLGLER…VKVAHQPDFG (64 aa)). An LXCXE motif motif is present at residues 105–109 (LFCHE). A phosphoserine; by host mark is found at Ser-114, Ser-122, and Ser-125. The segment at 115 to 137 (DEEGTADSQHSTPPKKKRKVEDP) is disordered. Thr-126 carries the phosphothreonine; by host modification. The Nuclear localization signal signature appears at 127 to 134 (PPKKKRKV). The T-ag OBD DNA-binding region spans 141–256 (PPDLHAFLSQ…EESIQGGLKE (116 aa)). A T-ag D1-type zinc finger spans residues 267-359 (TKQVSWKLIT…KRVDTLHMTR (93 aa)). Cys-304, Cys-307, His-315, and His-319 together coordinate Zn(2+). The 161-residue stretch at 402-562 (KMDTLIYDFL…IYLRKALNNS (161 aa)) folds into the SF3 helicase domain. 428–435 (GPIDSGKT) is a binding site for ATP. Positions 637-678 (ETEDSGHGSSTESQSQCFSQASDTSGSADAPASQTPDPYDHD) are disordered. Polar residues predominate over residues 643–672 (HGSSTESQSQCFSQASDTSGSADAPASQTP). A Phosphoserine; by host modification is found at Ser-661. Residue Lys-691 is modified to N6-acetyllysine; by host. Thr-695 carries the post-translational modification Phosphothreonine; by host.

As to quaternary structure, forms homohexamers in the presence of ATP. Interacts with host HDAC1. Interacts (via LXCXE domain) with host RB1; the interaction induces the aberrant dissociation of RB1-E2F1 complex thereby disrupting RB1's activity. Interacts (via LXCXE domain) with host pRB-related proteins RBL1 and RBL2. Interacts (via C-terminus) with host TOP1 and POLA1 allowing DNA replication. Interacts with host TP53, inhibiting TP53 binding to DNA. Interacts with host preinitiation complex components TBP, TFIIA and TFIID to regulate transcription initiation. The cofactor is Mg(2+). Phosphorylated on both serine and threonine residues. Small t antigen inhibits the dephosphorylation by the AC form of PP2A. Post-translationally, O-Glycosylated near the C-terminal region. In terms of processing, acetylated by CBP in a TP53-dependent manner.

Its subcellular location is the host nucleus. It carries out the reaction Couples ATP hydrolysis with the unwinding of duplex DNA by translocating in the 3'-5' direction.. It catalyses the reaction ATP + H2O = ADP + phosphate + H(+). Isoform large T antigen is a key early protein essential for both driving viral replication and inducing cellular transformation. Plays a role in viral genome replication by driving entry of quiescent cells into the cell cycle and by autoregulating the synthesis of viral early mRNA. Displays highly oncogenic activities by corrupting the host cellular checkpoint mechanisms that guard cell division and the transcription, replication, and repair of DNA. Participates in the modulation of cellular gene expression preceeding viral DNA replication. This step involves binding to host key cell cycle regulators retinoblastoma protein RB1/pRb and TP53. Induces the disassembly of host E2F1 transcription factors from RB1, thus promoting transcriptional activation of E2F1-regulated S-phase genes. Inhibits host TP53 binding to DNA, abrogating the ability of TP53 to stimulate gene expression. Plays the role of a TFIID-associated factor (TAF) in transcription initiation for all three RNA polymerases, by stabilizing the TBP-TFIIA complex on promoters. Initiates viral DNA replication and unwinding via interactions with the viral origin of replication. Binds two adjacent sites in the SV40 origin. The replication fork movement is facilitated by Large T antigen helicase activity. Has processive 3'-5' DNA helicase activity which requires a short 3' single-stranded region and ATP. Activates the transcription of viral late mRNA, through host TBP and TFIIA stabilization. Interferes with histone deacetylation mediated by HDAC1, leading to activation of transcription. In Papio hamadryas ursinus (Chacma baboon), this protein is Large T antigen.